Reading from the N-terminus, the 110-residue chain is Large ribosomal subunit protein uL22 (110 aa).

The protein belongs to the universal ribosomal protein uL22 family. As to quaternary structure, part of the 50S ribosomal subunit.

In terms of biological role, this protein binds specifically to 23S rRNA; its binding is stimulated by other ribosomal proteins, e.g. L4, L17, and L20. It is important during the early stages of 50S assembly. It makes multiple contacts with different domains of the 23S rRNA in the assembled 50S subunit and ribosome. Functionally, the globular domain of the protein is located near the polypeptide exit tunnel on the outside of the subunit, while an extended beta-hairpin is found that lines the wall of the exit tunnel in the center of the 70S ribosome. The chain is Large ribosomal subunit protein uL22 from Exiguobacterium sp. (strain ATCC BAA-1283 / AT1b).